We begin with the raw amino-acid sequence, 199 residues long: MAFKLPALPYGMRELIPHISEETLSFHYGKHHAGYVNKLNSLIKGTPLESCTIEELILGQTGAVFNNAAQIWNHTFYWNSMGPNCGGEPTGPIRKKIEEKFGSFSAFKTDFSNLLAGHFGSGWGWLVLKDDGTADIVQTHDAGSPLKENLGRPLLCCDVWEHAYYIDYKNDRLSYINSWWNLVNWDFANKNLEAPFKWS.

His-27, His-74, Asp-158, and His-162 together coordinate Fe cation.

The protein belongs to the iron/manganese superoxide dismutase family. Homodimer. Fe cation serves as cofactor.

The catalysed reaction is 2 superoxide + 2 H(+) = H2O2 + O2. In terms of biological role, destroys superoxide anion radicals which are normally produced within the cells and which are toxic to biological systems. The chain is Superoxide dismutase [Fe] (SODB) from Babesia bovis.